Reading from the N-terminus, the 353-residue chain is uncharacterized protein (353 aa).

Positions 1–30 (MHLRHLFSSRLRGSLLLGSLLVVSSFSTQA) are cleaved as a signal peptide.

Monomer.

This is an uncharacterized protein from Escherichia coli (strain K12).